Reading from the N-terminus, the 116-residue chain is Large ribosomal subunit protein uL22c (116 aa).

This sequence belongs to the universal ribosomal protein uL22 family. Part of the 50S ribosomal subunit.

The protein resides in the plastid. It localises to the chloroplast. In terms of biological role, this protein binds specifically to 23S rRNA. The globular domain of the protein is located near the polypeptide exit tunnel on the outside of the subunit, while an extended beta-hairpin is found that lines the wall of the exit tunnel in the center of the 70S ribosome. In Psilotum nudum (Whisk fern), this protein is Large ribosomal subunit protein uL22c (rpl22).